A 911-amino-acid polypeptide reads, in one-letter code: DNA mismatch repair protein MutS (911 aa).

A disordered region spans residues 1–95; sequence MALQGNLFGD…PWSHHSQVTP (95 aa). A compositionally biased stretch (basic and acidic residues) spans 23 to 42; it reads KRQDEPDQLDDHELTQDAKQ. 727 to 734 contributes to the ATP binding site; sequence GPNASGKS.

Belongs to the DNA mismatch repair MutS family.

This protein is involved in the repair of mismatches in DNA. It is possible that it carries out the mismatch recognition step. This protein has a weak ATPase activity. In Synechococcus sp. (strain CC9311), this protein is DNA mismatch repair protein MutS.